The sequence spans 303 residues: 4-hydroxy-tetrahydrodipicolinate synthase (303 aa).

Residue Thr57 participates in pyruvate binding. The Proton donor/acceptor role is filled by Tyr143. Lys171 acts as the Schiff-base intermediate with substrate in catalysis. Ile211 provides a ligand contact to pyruvate.

This sequence belongs to the DapA family. Homotetramer; dimer of dimers.

The protein localises to the cytoplasm. It carries out the reaction L-aspartate 4-semialdehyde + pyruvate = (2S,4S)-4-hydroxy-2,3,4,5-tetrahydrodipicolinate + H2O + H(+). Its pathway is amino-acid biosynthesis; L-lysine biosynthesis via DAP pathway; (S)-tetrahydrodipicolinate from L-aspartate: step 3/4. In terms of biological role, catalyzes the condensation of (S)-aspartate-beta-semialdehyde [(S)-ASA] and pyruvate to 4-hydroxy-tetrahydrodipicolinate (HTPA). This is 4-hydroxy-tetrahydrodipicolinate synthase from Bifidobacterium animalis subsp. lactis (strain AD011).